We begin with the raw amino-acid sequence, 744 residues long: Zinc finger protein 366 (744 aa).

Residues 206 to 228 (KQPPEPLLPRKAEPQESEETKQK) are disordered. Residues 213–228 (LPRKAEPQESEETKQK) are compositionally biased toward basic and acidic residues. 11 C2H2-type zinc fingers span residues 253 to 275 (WQCP…ILGH), 281 to 303 (HACT…MLTH), 309 to 331 (HKCQ…MMQH), 337 to 359 (HNCR…EAKH), 365 to 387 (NICV…LTTH), 393 to 415 (YNCS…MMKH), 421 to 443 (YICS…SLTH), 449 to 471 (HKCG…VLIH), 477 to 499 (YQCH…MIVH), 505 to 527 (FKCK…MHLH), and 533 to 556 (FKCL…KVKH). The segment at 455 to 744 (GREFTLLANM…MEKQAVLLGI (290 aa)) is interaction with NRIP1. The PXDLS motif lies at 590–594 (PFDLS). Disordered regions lie at residues 603 to 627 (VFQS…NCYE) and 664 to 692 (KEEK…QERD).

Interacts with ESR1 and NRIP1. Interacts (via PXDLS motif) with CTBP1. In terms of tissue distribution, expressed in immature and mature dendritic cells (DCs). Not detected in other blood cell types.

Its subcellular location is the nucleus. Has transcriptional repression activity. Acts as a corepressor of ESR1; the function seems to involve CTBP1 and histone deacetylases. This Homo sapiens (Human) protein is Zinc finger protein 366.